A 115-amino-acid polypeptide reads, in one-letter code: NADH-ubiquinone oxidoreductase chain 3 (115 aa).

3 helical membrane passes run 4–24 (LMAL…AFWL), 55–75 (FFLV…LLPL), and 86–106 (TMML…AYEW).

Belongs to the complex I subunit 3 family. As to quaternary structure, core subunit of respiratory chain NADH dehydrogenase (Complex I) which is composed of 45 different subunits. Interacts with TMEM186. Interacts with TMEM242.

It localises to the mitochondrion inner membrane. It catalyses the reaction a ubiquinone + NADH + 5 H(+)(in) = a ubiquinol + NAD(+) + 4 H(+)(out). Its function is as follows. Core subunit of the mitochondrial membrane respiratory chain NADH dehydrogenase (Complex I) which catalyzes electron transfer from NADH through the respiratory chain, using ubiquinone as an electron acceptor. Essential for the catalytic activity of complex I. This Peromyscus gossypinus (Cotton deermouse) protein is NADH-ubiquinone oxidoreductase chain 3.